The chain runs to 572 residues: Proline--tRNA ligase (572 aa).

Belongs to the class-II aminoacyl-tRNA synthetase family. ProS type 1 subfamily. Homodimer.

The protein localises to the cytoplasm. It carries out the reaction tRNA(Pro) + L-proline + ATP = L-prolyl-tRNA(Pro) + AMP + diphosphate. In terms of biological role, catalyzes the attachment of proline to tRNA(Pro) in a two-step reaction: proline is first activated by ATP to form Pro-AMP and then transferred to the acceptor end of tRNA(Pro). As ProRS can inadvertently accommodate and process non-cognate amino acids such as alanine and cysteine, to avoid such errors it has two additional distinct editing activities against alanine. One activity is designated as 'pretransfer' editing and involves the tRNA(Pro)-independent hydrolysis of activated Ala-AMP. The other activity is designated 'posttransfer' editing and involves deacylation of mischarged Ala-tRNA(Pro). The misacylated Cys-tRNA(Pro) is not edited by ProRS. The protein is Proline--tRNA ligase of Photorhabdus laumondii subsp. laumondii (strain DSM 15139 / CIP 105565 / TT01) (Photorhabdus luminescens subsp. laumondii).